Reading from the N-terminus, the 211-residue chain is Interleukin-6 (211 aa).

The signal sequence occupies residues 1-25 (MNSLSTSTFSPVAFSLGLLLVMATA). Cysteines 71 and 77 form a disulfide. Ser80 carries the post-translational modification Phosphoserine. Cys100 and Cys110 are disulfide-bonded.

The protein belongs to the IL-6 superfamily. As to quaternary structure, component of a hexamer of two molecules each of IL6, IL6R and IL6ST; first binds to IL6R to associate with the signaling subunit IL6ST. Interacts with IL6R (via the N-terminal ectodomain); this interaction may be affected by IL6R-binding with SORL1, hence decreasing IL6 cis signaling. Interacts with SORL1 (via the N-terminal ectodomain); this interaction leads to IL6 internalization and lysosomal degradation. May form a trimeric complex with the soluble SORL1 ectodomain and soluble IL6R receptor; this interaction might stabilize circulating IL6, hence promoting IL6 trans signaling.

It is found in the secreted. Functionally, cytokine with a wide variety of biological functions in immunity, tissue regeneration, and metabolism. Binds to IL6R, then the complex associates to the signaling subunit IL6ST/gp130 to trigger the intracellular IL6-signaling pathway. The interaction with the membrane-bound IL6R and IL6ST stimulates 'classic signaling', whereas the binding of IL6 and soluble IL6R to IL6ST stimulates 'trans-signaling'. Alternatively, 'cluster signaling' occurs when membrane-bound IL6:IL6R complexes on transmitter cells activate IL6ST receptors on neighboring receiver cells. In terms of biological role, IL6 is a potent inducer of the acute phase response. Rapid production of IL6 contributes to host defense during infection and tissue injury, but excessive IL6 synthesis is involved in disease pathology. In the innate immune response, is synthesized by myeloid cells, such as macrophages and dendritic cells, upon recognition of pathogens through toll-like receptors (TLRs) at the site of infection or tissue injury. In the adaptive immune response, is required for the differentiation of B cells into immunoglobulin-secreting cells. Plays a major role in the differentiation of CD4(+) T cell subsets. Essential factor for the development of T follicular helper (Tfh) cells that are required for the induction of germinal-center formation. Required to drive naive CD4(+) T cells to the Th17 lineage. Also required for proliferation of myeloma cells and the survival of plasmablast cells. Acts as an essential factor in bone homeostasis and on vessels directly or indirectly by induction of VEGF, resulting in increased angiogenesis activity and vascular permeability. Induces, through 'trans-signaling' and synergistically with IL1B and TNF, the production of VEGF. Involved in metabolic controls, is discharged into the bloodstream after muscle contraction increasing lipolysis and improving insulin resistance. 'Trans-signaling' in central nervous system also regulates energy and glucose homeostasis. Mediates, through GLP-1, crosstalk between insulin-sensitive tissues, intestinal L cells and pancreatic islets to adapt to changes in insulin demand. Also acts as a myokine. Plays a protective role during liver injury, being required for maintenance of tissue regeneration. Also has a pivotal role in iron metabolism by regulating HAMP/hepcidin expression upon inflammation or bacterial infection. Through activation of IL6ST-YAP-NOTCH pathway, induces inflammation-induced epithelial regeneration. The sequence is that of Interleukin-6 (IL6) from Lama glama (Llama).